A 100-amino-acid chain; its full sequence is uncharacterized protein (100 aa).

Positions 78–100 (KPYRTESGTSSSNRMMLPPRQHV) are disordered.

This is an uncharacterized protein from Caenorhabditis elegans.